We begin with the raw amino-acid sequence, 280 residues long: Orotidine 5'-phosphate decarboxylase (280 aa).

The Proton donor role is filled by lysine 96.

It belongs to the OMP decarboxylase family. Type 2 subfamily.

It carries out the reaction orotidine 5'-phosphate + H(+) = UMP + CO2. The protein operates within pyrimidine metabolism; UMP biosynthesis via de novo pathway; UMP from orotate: step 2/2. This chain is Orotidine 5'-phosphate decarboxylase, found in Parabacteroides distasonis (strain ATCC 8503 / DSM 20701 / CIP 104284 / JCM 5825 / NCTC 11152).